A 199-amino-acid polypeptide reads, in one-letter code: Chromophore lyase CpcT/CpeT (199 aa).

This sequence belongs to the CpcT/CpeT biliprotein lyase family.

Functionally, covalently attaches a chromophore to Cys residue(s) of phycobiliproteins. This chain is Chromophore lyase CpcT/CpeT, found in Prochlorococcus marinus (strain NATL1A).